The primary structure comprises 112 residues: ATP synthase subunit c (112 aa).

2 consecutive transmembrane segments (helical) span residues 36–56 (FSVL…AIGM) and 81–101 (MFIA…IALI).

It belongs to the ATPase C chain family. F-type ATPases have 2 components, F(1) - the catalytic core - and F(0) - the membrane proton channel. F(1) has five subunits: alpha(3), beta(3), gamma(1), delta(1), epsilon(1). F(0) has three main subunits: a(1), b(2) and c(10-14). The alpha and beta chains form an alternating ring which encloses part of the gamma chain. F(1) is attached to F(0) by a central stalk formed by the gamma and epsilon chains, while a peripheral stalk is formed by the delta and b chains.

The protein resides in the cell inner membrane. In terms of biological role, f(1)F(0) ATP synthase produces ATP from ADP in the presence of a proton or sodium gradient. F-type ATPases consist of two structural domains, F(1) containing the extramembraneous catalytic core and F(0) containing the membrane proton channel, linked together by a central stalk and a peripheral stalk. During catalysis, ATP synthesis in the catalytic domain of F(1) is coupled via a rotary mechanism of the central stalk subunits to proton translocation. Key component of the F(0) channel; it plays a direct role in translocation across the membrane. A homomeric c-ring of between 10-14 subunits forms the central stalk rotor element with the F(1) delta and epsilon subunits. The chain is ATP synthase subunit c from Campylobacter jejuni subsp. jejuni serotype O:6 (strain 81116 / NCTC 11828).